The following is a 308-amino-acid chain: Shikimate kinase 1, chloroplastic (308 aa).

The N-terminal 62 residues, 1 to 62, are a transit peptide targeting the chloroplast; it reads MEAGVGLALQ…RGSKPVAPLR (62 aa). 103-110 is an ATP binding site; it reads GMMGSGKS. A Mg(2+)-binding site is contributed by S110. 3 residues coordinate substrate: D128, R153, and G175. R214 is an ATP binding site.

It belongs to the shikimate kinase family. It depends on Mg(2+) as a cofactor. In terms of tissue distribution, expressed in panicles.

It localises to the plastid. Its subcellular location is the chloroplast. It carries out the reaction shikimate + ATP = 3-phosphoshikimate + ADP + H(+). The protein operates within metabolic intermediate biosynthesis; chorismate biosynthesis; chorismate from D-erythrose 4-phosphate and phosphoenolpyruvate: step 5/7. Its function is as follows. Catalyzes the specific phosphorylation of the 3-hydroxyl group of shikimic acid using ATP as a cosubstrate. This chain is Shikimate kinase 1, chloroplastic (SK1), found in Oryza sativa subsp. japonica (Rice).